Here is a 413-residue protein sequence, read N- to C-terminus: Eukaryotic initiation factor 4A-9 (413 aa).

The Q motif motif lies at 40 to 68 (HSFDAMGLKENLLRGIYAYGFEKPSAIQQ). Positions 71–241 (IVPFCKGLDV…RKFMNKPVRI (171 aa)) constitute a Helicase ATP-binding domain. 84-91 (AQSGTGKT) lines the ATP pocket. Residues 189 to 192 (DEAD) carry the DEAD box motif. The 162-residue stretch at 252–413 (GIKQFYVNVD…ELPANVADLL (162 aa)) folds into the Helicase C-terminal domain.

The protein belongs to the DEAD box helicase family. eIF4A subfamily. EIF4F is a multi-subunit complex, the composition of which varies with external and internal environmental conditions. It is composed of at least EIF4A, EIF4E and EIF4G.

The catalysed reaction is ATP + H2O = ADP + phosphate + H(+). ATP-dependent RNA helicase which is a subunit of the eIF4F complex involved in cap recognition and is required for mRNA binding to ribosome. In the current model of translation initiation, eIF4A unwinds RNA secondary structures in the 5'-UTR of mRNAs which is necessary to allow efficient binding of the small ribosomal subunit, and subsequent scanning for the initiator codon. The sequence is that of Eukaryotic initiation factor 4A-9 from Nicotiana tabacum (Common tobacco).